We begin with the raw amino-acid sequence, 110 residues long: uncharacterized protein (110 aa).

Transmembrane regions (helical) follow at residues 32–52, 57–77, and 90–110; these read VLNVVSIAILFETPHRLALVP, YTHMAIPLSTCLFCLCLCICI, and FLASFFVLILTINDLDVTFVI.

The protein resides in the membrane. Functionally, may play a role in proper chromosome segregation. Suppresses the high-frequency loss of mini-chromosomes when overexpressed, and this suppression is completely dependent on silencing protein SIR4. This is an uncharacterized protein from Saccharomyces cerevisiae (strain ATCC 204508 / S288c) (Baker's yeast).